The primary structure comprises 267 residues: Kit ligand (267 aa).

A signal peptide spans 1 to 25; the sequence is MKKTQTWIITCIYLQLLLFNPLVHT. Pyrrolidone carboxylic acid is present on glutamine 26. The Extracellular segment spans residues 26-215; that stretch reads QGICRNRVTD…SNSIEDSSLQ (190 aa). 2 disulfides stabilise this stretch: cysteine 29–cysteine 114 and cysteine 68–cysteine 164. Residues asparagine 90, asparagine 97, asparagine 145, and asparagine 196 are each glycosylated (N-linked (GlcNAc...) asparagine). A helical transmembrane segment spans residues 216 to 238; that stretch reads WAAVALPAFFSLVIGFAFGALYW. Over 239 to 267 the chain is Cytoplasmic; sequence KKKQPNLTRTVENRQINEEDNEISMLQEK.

This sequence belongs to the SCF family. In terms of assembly, homodimer, non-covalently linked. Heterotetramer with KIT, binding two KIT molecules; thereby mediates KIT dimerization and subsequent activation by autophosphorylation. A soluble form is produced by proteolytic processing of the extracellular domain.

It localises to the cytoplasm. The protein localises to the cytoskeleton. Its subcellular location is the cell membrane. The protein resides in the cell projection. It is found in the lamellipodium. It localises to the filopodium. The protein localises to the secreted. Functionally, ligand for the receptor-type protein-tyrosine kinase KIT. Plays an essential role in the regulation of cell survival and proliferation, hematopoiesis, stem cell maintenance, gametogenesis, mast cell development, migration and function, and in melanogenesis. KITLG/SCF binding can activate several signaling pathways. Promotes phosphorylation of PIK3R1, the regulatory subunit of phosphatidylinositol 3-kinase, and subsequent activation of the kinase AKT1. KITLG/SCF and KIT also transmit signals via GRB2 and activation of RAS, RAF1 and the MAP kinases MAPK1/ERK2 and/or MAPK3/ERK1. KITLG/SCF and KIT promote activation of STAT family members STAT1, STAT3 and STAT5. KITLG/SCF and KIT promote activation of PLCG1, leading to the production of the cellular signaling molecules diacylglycerol and inositol 1,4,5-trisphosphate. KITLG/SCF acts synergistically with other cytokines, probably interleukins. This chain is Kit ligand (KITLG), found in Ovis aries (Sheep).